We begin with the raw amino-acid sequence, 368 residues long: N-acetylneuraminate epimerase (368 aa).

The signal sequence occupies residues 1–19 (MNKTITALAIIMASFAANA). 7 Kelch repeats span residues 40–84 (TVYI…AFID), 86–137 (NLYV…FVHN), 139–173 (KAYVTGGVNQNIFNGYFEDLNEAGKDSTAVDKINA), 174–219 (YYFD…VNKG), 222–265 (TWLI…VAGG), 287–336 (ENYQ…PWNN), and 338–367 (LLIIGGETAGGKAVTDSVFISVKDNKVTVQ). Glutamate 228 functions as the Proton acceptor in the catalytic mechanism.

Belongs to the NanM family. Homodimer.

The protein localises to the periplasm. The catalysed reaction is N-acetyl-alpha-neuraminate = N-acetyl-beta-neuraminate. Converts alpha-N-acetylneuranimic acid (Neu5Ac) to the beta-anomer, accelerating the equilibrium between the alpha- and beta-anomers. Probably facilitates sialidase-negative bacteria to compete successfully for limited amounts of extracellular Neu5Ac, which is likely taken up in the beta-anomer. In addition, the rapid removal of sialic acid from solution might be advantageous to the bacterium to damp down host responses. This chain is N-acetylneuraminate epimerase, found in Escherichia coli O139:H28 (strain E24377A / ETEC).